The following is a 1173-amino-acid chain: TBC1 domain family member 5 homolog A (1173 aa).

Disordered regions lie at residues 22–203 (KKSK…YYNE), 217–324 (NNYN…RNPN), 425–446 (DQDA…KPVS), and 823–872 (IVNQ…QNKG). 3 stretches are compositionally biased toward low complexity: residues 26–107 (SNIN…NNVN), 127–203 (NNNI…YYNE), and 217–290 (NNYN…QQYY). Positions 163–214 (NENYNENYNNNNNNNNNNNNNNNNNNNNNNNNNNNNNYYNENNNQQQLQQNY) form a coiled coil. Over residues 299-313 (QHEEFEKEIEQKEQD) the composition is skewed to basic and acidic residues. Residues 314–324 (SSPINVNRNPN) show a composition bias toward polar residues. A Rab-GAP TBC domain is found at 374–729 (PKDTTVRSIF…ILWDSIFKES (356 aa)). The segment covering 431–441 (QQQQQQQQQQQ) has biased composition (low complexity). A coiled-coil region spans residues 885–930 (TFKQIINDLNEYNEEFQLAKENEQLKQQKSKLQKEVDTLKETQTHV). The span at 983–994 (NNSKNRLPNKSV) shows a compositional bias: polar residues. 2 disordered regions span residues 983 to 1015 (NNSK…QQTS) and 1054 to 1089 (QSTQ…QQYN). Composition is skewed to low complexity over residues 995–1015 (QQST…QQTS) and 1054–1078 (QSTQ…QSQQ). Over residues 1079–1089 (NNDNSPFQQYN) the composition is skewed to polar residues.

May act as a GTPase-activating protein for Rab family protein(s). The polypeptide is TBC1 domain family member 5 homolog A (tbc1d5A) (Dictyostelium discoideum (Social amoeba)).